We begin with the raw amino-acid sequence, 645 residues long: Acetyl-coenzyme A synthetase (645 aa).

Residues 190–193 (RGGR), Thr309, and Asn333 contribute to the CoA site. ATP is bound by residues 385-387 (GEP), 409-414 (DTWWQT), Asp498, and Arg513. A CoA-binding site is contributed by Ser521. ATP is bound at residue Arg524. Residues Val535, His537, and Val540 each coordinate Mg(2+). Arg582 lines the CoA pocket. Residue Lys607 is modified to N6-acetyllysine.

The protein belongs to the ATP-dependent AMP-binding enzyme family. The cofactor is Mg(2+). Post-translationally, acetylated. Deacetylation by the SIR2-homolog deacetylase activates the enzyme.

It catalyses the reaction acetate + ATP + CoA = acetyl-CoA + AMP + diphosphate. In terms of biological role, catalyzes the conversion of acetate into acetyl-CoA (AcCoA), an essential intermediate at the junction of anabolic and catabolic pathways. AcsA undergoes a two-step reaction. In the first half reaction, AcsA combines acetate with ATP to form acetyl-adenylate (AcAMP) intermediate. In the second half reaction, it can then transfer the acetyl group from AcAMP to the sulfhydryl group of CoA, forming the product AcCoA. This chain is Acetyl-coenzyme A synthetase, found in Beijerinckia indica subsp. indica (strain ATCC 9039 / DSM 1715 / NCIMB 8712).